The sequence spans 1130 residues: MSEELKSLIQPHIDSFDFFTDHGIDLVLKDSEPLYFEHNSTQYKIRFTDLKLSRPTRNIVEKEIKLYPNESRETGTTYNAPFKGAIGLYEVNEMDEMDDGTEVDYNKQEPTHTFEVDLGRLPIMVKSRYCHLNGMSPEKLIESREEELEQGGYFIVNGNEKVVRMLVMTKANHPVALHRKAWTNRGPGYTKNGITIRCVRPDRSSITNNLHYINDGQTTLRFLYRRQEFFLPATLLLKALKDTTEKEIYENIVQGDNENTFLTDRVELSLREQKINNINTQEEVLDYIGSRFRARTQFPPSFSNIKIGRWFINQFVFVHLPNYNDKYNLLILMIQKLYAMVGGKCGTDNIDSPAFQEVLLAGHIYGMILKEKLTEYLESTKSFVLKSFEDKKKSGDKLPDALKKVLDKNFKIADRFSYFLATGNLRSSSGIDLQQTSGFCVIADKLNFLRFISHFRSIHRGAFFATMKTTAIRKLMPESWGFFCPVHTPDGAPCGLLNHLSSNCLVTVDAAQDPTVQKAQTLLPSFLAAHGMLPIDMVSVYQHQYLTITLDGRVLGKIEPKAGEEMVKMLRYLRSMGNEPSIPKTMEISYAPPTNVENGQYSGISLFTTGARFMRPVVNLTSGQNELIGPQEQLYMEIAVVPHEVIKGVTTHIETSPTAMFSLLANLTPFSDYNQSPRNMYQCQMAKQTMGTPLHSYPFRTDNKLYKVQNVQKPIVHTKNQFKFRCNDYPHGCNAVIAVISNTGYDMEDAMIINKSAYERGFGHGSVYKNEYIDLDQGLSRFEQKKTFFGRPNTVVDELDKFIDTDGLPFVGRLIKPGEPYYTYIRPSDGRQVTKDYKGKEEAYIEDVRIIFGPNGATRDPSKINNICVKLRFNRNPVIGDKFSSRHGQKGVLSQLWPEINMPFTESGMKPDVIINPNAFPSRMTIGMLVEILAGKAGAIHGKFQDATAFQFDENNTAIDFFGEQLAKAGFNRFGNEQMYSGTTGKEFECEIFFGVCYYQRLRHMVKDKYQVRALGKVNALTRQPIKGRKVGGGIRFGEMERDSLLAHGASFCLNDRLMKSSDFAKIKVCKLCGSTLTIYSKKDYSNQTVSECKSCKSSDSIATISIPYVFTYLVAELAAVNITMKLQVS.

A C4-type zinc finger spans residues Cys-1070–Cys-1096.

Belongs to the RNA polymerase beta chain family. In terms of assembly, component of the RNA polymerase I (Pol I) complex consisting of 14 subunits.

It localises to the nucleus. It is found in the nucleolus. The enzyme catalyses RNA(n) + a ribonucleoside 5'-triphosphate = RNA(n+1) + diphosphate. Its function is as follows. DNA-dependent RNA polymerase catalyzes the transcription of DNA into RNA using the four ribonucleoside triphosphates as substrates. Second largest core component of RNA polymerase I which synthesizes ribosomal RNA precursors. Proposed to contribute to the polymerase catalytic activity and forms the polymerase active center together with the largest subunit. Pol I is composed of mobile elements and RPA2 is part of the core element with the central large cleft and probably a clamp element that moves to open and close the cleft. The sequence is that of DNA-directed RNA polymerase I subunit rpa2 (polr1b) from Dictyostelium discoideum (Social amoeba).